Consider the following 190-residue polypeptide: Adenine phosphoribosyltransferase (190 aa).

Belongs to the purine/pyrimidine phosphoribosyltransferase family. As to quaternary structure, homodimer.

Its subcellular location is the cytoplasm. The enzyme catalyses AMP + diphosphate = 5-phospho-alpha-D-ribose 1-diphosphate + adenine. It functions in the pathway purine metabolism; AMP biosynthesis via salvage pathway; AMP from adenine: step 1/1. Catalyzes a salvage reaction resulting in the formation of AMP, that is energically less costly than de novo synthesis. The protein is Adenine phosphoribosyltransferase of Cupriavidus pinatubonensis (strain JMP 134 / LMG 1197) (Cupriavidus necator (strain JMP 134)).